A 201-amino-acid chain; its full sequence is Imidazole glycerol phosphate synthase subunit HisH (201 aa).

The region spanning M1–R201 is the Glutamine amidotransferase type-1 domain. C79 serves as the catalytic Nucleophile. Active-site residues include H181 and E183.

Heterodimer of HisH and HisF.

Its subcellular location is the cytoplasm. The enzyme catalyses 5-[(5-phospho-1-deoxy-D-ribulos-1-ylimino)methylamino]-1-(5-phospho-beta-D-ribosyl)imidazole-4-carboxamide + L-glutamine = D-erythro-1-(imidazol-4-yl)glycerol 3-phosphate + 5-amino-1-(5-phospho-beta-D-ribosyl)imidazole-4-carboxamide + L-glutamate + H(+). It carries out the reaction L-glutamine + H2O = L-glutamate + NH4(+). It participates in amino-acid biosynthesis; L-histidine biosynthesis; L-histidine from 5-phospho-alpha-D-ribose 1-diphosphate: step 5/9. IGPS catalyzes the conversion of PRFAR and glutamine to IGP, AICAR and glutamate. The HisH subunit catalyzes the hydrolysis of glutamine to glutamate and ammonia as part of the synthesis of IGP and AICAR. The resulting ammonia molecule is channeled to the active site of HisF. The polypeptide is Imidazole glycerol phosphate synthase subunit HisH (Oceanobacillus iheyensis (strain DSM 14371 / CIP 107618 / JCM 11309 / KCTC 3954 / HTE831)).